Here is a 411-residue protein sequence, read N- to C-terminus: Probable G-protein coupled receptor AH9.1 (411 aa).

Residues 1 to 18 lie on the Cytoplasmic side of the membrane; it reads MLLFLLRRIFDCRYKYKL. The helical transmembrane segment at 19–39 threads the bilayer; that stretch reads FVKALVLFLTIVYNAGLVHFF. Residues 40-55 are Extracellular-facing; it reads FRTTSLDDSPEMNHVD. Residues 56 to 76 form a helical membrane-spanning segment; the sequence is YVAHVIVMPIVLSIGMINQCL. Topologically, residues 77–87 are cytoplasmic; the sequence is NVCTLLHIRTS. The chain crosses the membrane as a helical span at residues 88 to 108; the sequence is IFLYLKASAIADILSIVAFIP. The Extracellular segment spans residues 109–131; it reads FLFRHAKLIDPSWELGMFYHAHL. Residues 132–152 traverse the membrane as a helical segment; it reads ELPLINALISASALNIVAMTV. The Cytoplasmic portion of the chain corresponds to 153 to 176; it reads DRYVSVCHPIKFFQNNETKPSRRR. Residues 177 to 197 traverse the membrane as a helical segment; that stretch reads TMLIIVMIYFIALMIYFPSVF. Over 198–229 the chain is Extracellular; it reads QKKLGVVTDALTNKTIYTIVRNEDVEALQVFK. A glycan (N-linked (GlcNAc...) asparagine) is linked at N210. Residues 230–250 form a helical membrane-spanning segment; sequence FYLIVRECICRWGPVLLLVIL. Topologically, residues 251 to 299 are cytoplasmic; that stretch reads NMCVVRGLRKIDKRNWFWRQPSQNSRTETLAQRQLRSPRDDRSRISVLL. A helical transmembrane segment spans residues 300–320; the sequence is FVTSATFIICNIPASVISFFV. Topologically, residues 321–333 are extracellular; that stretch reads RRVSGSLFWQIFR. A helical membrane pass occupies residues 334–354; that stretch reads AIANLLQVTSYLYNFYLYALC. Residues 355 to 411 lie on the Cytoplasmic side of the membrane; it reads SSEYRHAFLRLFGCRSSLSPTSTGDSPTVRVSVHGKRCHQAVVLLGNENHENPVDEV.

This sequence belongs to the G-protein coupled receptor 1 family.

The protein resides in the cell membrane. Its function is as follows. Not known. Putative receptor. This chain is Probable G-protein coupled receptor AH9.1, found in Caenorhabditis elegans.